The sequence spans 382 residues: Chaperone protein DnaJ (382 aa).

Residues 4–69 (DYYEVLGVSR…DKRRRYDQFG (66 aa)) enclose the J domain. The CR-type zinc finger occupies 138 to 219 (GVEKTIKIKK…CYGEGIKQGE (82 aa)). Cys-151, Cys-154, Cys-167, Cys-170, Cys-193, Cys-196, Cys-207, and Cys-210 together coordinate Zn(2+). CXXCXGXG motif repeat units lie at residues 151–158 (CKECNGSG), 167–174 (CPTCHGAG), 193–200 (CPTCGGEG), and 207–214 (CPSCYGEG).

It belongs to the DnaJ family. Homodimer. Zn(2+) serves as cofactor.

The protein resides in the cytoplasm. Functionally, participates actively in the response to hyperosmotic and heat shock by preventing the aggregation of stress-denatured proteins and by disaggregating proteins, also in an autonomous, DnaK-independent fashion. Unfolded proteins bind initially to DnaJ; upon interaction with the DnaJ-bound protein, DnaK hydrolyzes its bound ATP, resulting in the formation of a stable complex. GrpE releases ADP from DnaK; ATP binding to DnaK triggers the release of the substrate protein, thus completing the reaction cycle. Several rounds of ATP-dependent interactions between DnaJ, DnaK and GrpE are required for fully efficient folding. Also involved, together with DnaK and GrpE, in the DNA replication of plasmids through activation of initiation proteins. This Chlorobium luteolum (strain DSM 273 / BCRC 81028 / 2530) (Pelodictyon luteolum) protein is Chaperone protein DnaJ.